The chain runs to 288 residues: Diaminopimelate epimerase (288 aa).

3 residues coordinate substrate: N13, Q46, and N66. C75 acts as the Proton donor in catalysis. Substrate contacts are provided by residues 76–77 (GN), N166, N199, and 217–218 (ER). Catalysis depends on C226, which acts as the Proton acceptor. 227–228 (GT) provides a ligand contact to substrate.

This sequence belongs to the diaminopimelate epimerase family. In terms of assembly, homodimer.

Its subcellular location is the cytoplasm. It catalyses the reaction (2S,6S)-2,6-diaminopimelate = meso-2,6-diaminopimelate. Its pathway is amino-acid biosynthesis; L-lysine biosynthesis via DAP pathway; DL-2,6-diaminopimelate from LL-2,6-diaminopimelate: step 1/1. Functionally, catalyzes the stereoinversion of LL-2,6-diaminopimelate (L,L-DAP) to meso-diaminopimelate (meso-DAP), a precursor of L-lysine and an essential component of the bacterial peptidoglycan. The chain is Diaminopimelate epimerase from Cupriavidus taiwanensis (strain DSM 17343 / BCRC 17206 / CCUG 44338 / CIP 107171 / LMG 19424 / R1) (Ralstonia taiwanensis (strain LMG 19424)).